The chain runs to 610 residues: All-trans-retinol 13,14-reductase (610 aa).

The first 18 residues, M1 to C18, serve as a signal peptide directing secretion.

It belongs to the carotenoid/retinoid oxidoreductase family. CrtISO subfamily. The cofactor is NAD(+). It depends on NADP(+) as a cofactor. FAD serves as cofactor. As to expression, expressed in liver; expression positively correlates with obesity and liver steatosis. Expressed in adipose tissue; expression tends to be decreased in obese versus lean individuals.

Its subcellular location is the endoplasmic reticulum membrane. The catalysed reaction is all-trans-13,14-dihydroretinol + A = all-trans-retinol + AH2. In terms of biological role, catalyzes the saturation of all-trans-retinol to all-trans-13,14-dihydroretinol. Does not exhibit any activity toward all-trans-retinoic acid, nor 9-cis, 11-cis or 13-cis-retinol isomers. May play a role in the metabolism of vitamin A. Independently of retinol conversion, may regulate liver metabolism upstream of MLXIPL/ChREBP. May play a role in adipocyte differentiation. The sequence is that of All-trans-retinol 13,14-reductase (RETSAT) from Homo sapiens (Human).